We begin with the raw amino-acid sequence, 172 residues long: UPF0316 protein Clos_0555 (172 aa).

Transmembrane regions (helical) follow at residues Ala3–Ile23, Val34–Val54, and Pro61–Leu81.

Belongs to the UPF0316 family.

The protein localises to the cell membrane. The polypeptide is UPF0316 protein Clos_0555 (Alkaliphilus oremlandii (strain OhILAs) (Clostridium oremlandii (strain OhILAs))).